A 161-amino-acid polypeptide reads, in one-letter code: TRAF-interacting protein with FHA domain-containing protein B (161 aa).

The 56-residue stretch at 36–91 (LLLGRGQDAHLQLQLPRLSRRHLSLEPYLEKGSALLAFCLKALSRKGCVWVNGLTL) folds into the FHA domain.

In terms of assembly, interacts with TIFA.

In terms of biological role, inhibits TIFA-mediated TRAF6 activation possibly by inducing a conformational change in TIFA. The protein is TRAF-interacting protein with FHA domain-containing protein B of Homo sapiens (Human).